A 41-amino-acid polypeptide reads, in one-letter code: Photosystem I reaction center subunit IX (41 aa).

A helical transmembrane segment spans residues 7 to 27; the sequence is YLSTAPVIALAWMSFTAGLLI.

This sequence belongs to the PsaJ family.

It localises to the plastid. Its subcellular location is the chloroplast thylakoid membrane. Its function is as follows. May help in the organization of the PsaE and PsaF subunits. This Tupiella akineta (Green alga) protein is Photosystem I reaction center subunit IX.